Here is a 1790-residue protein sequence, read N- to C-terminus: Cytokinesis protein sepA (1790 aa).

Disordered stretches follow at residues 1 to 275 (MPTS…YLTR) and 328 to 350 (GEQK…GILE). The segment covering 24–35 (ERPVEDRWDAHG) has biased composition (basic and acidic residues). 2 stretches are compositionally biased toward low complexity: residues 39–62 (SLAP…SIQS) and 187–203 (SHHS…SRMS). A compositionally biased stretch (polar residues) spans 205–236 (DQASIHSSLSSNTRGSSYISTDGSSRTTLPSH). The GBD/FH3 domain occupies 274-702 (TRPRDDRVVD…YVAMDRRLPD (429 aa)). Positions 328-341 (GEQKRKQKARETHG) are enriched in basic and acidic residues. Positions 724–811 (AEARRAYDES…QRNELETREL (88 aa)) form a coiled coil. One can recognise an FH1 domain in the interval 955–1136 (DPEQATGLLG…NYLASQGAPS (182 aa)). Basic and acidic residues predominate over residues 975–986 (ADDAKDEGKPTE). Disordered stretches follow at residues 975–1119 (ADDA…PPGT), 1465–1484 (NLSD…ITQR), and 1596–1790 (RAAA…PSTS). Composition is skewed to pro residues over residues 1015–1026 (APPPPPPPPPAH) and 1033–1118 (APPP…PPPG). The 424-residue stretch at 1141–1564 (VMSSIRPKKK…TEASLARKRI (424 aa)) folds into the FH2 domain. The stretch at 1435 to 1566 (LQKLNVDQLR…ASLARKRINV (132 aa)) forms a coiled coil. Positions 1581–1613 (SPATSGAMDSLLEKLRAAAPQAKDQRDRRRRAR) constitute a DAD domain. The span at 1608-1620 (RRRRARLKERHQV) shows a compositional bias: basic residues. The segment covering 1644–1661 (SGATDTNATDSSLLSPTI) has biased composition (polar residues). Over residues 1694–1710 (PDPERTRRRRESAEEER) the composition is skewed to basic and acidic residues. Residues 1720–1746 (GATSGSKDSNDTTPLSPVTEPTSTQGE) show a composition bias toward polar residues.

This sequence belongs to the formin homology family. BNI1 subfamily.

Involved in cytokinesis. Overexpression results in growth inhibition. This Emericella nidulans (strain FGSC A4 / ATCC 38163 / CBS 112.46 / NRRL 194 / M139) (Aspergillus nidulans) protein is Cytokinesis protein sepA (sepA).